A 168-amino-acid chain; its full sequence is MSDQGTNNGESGNGGAQNGEAPQLRVLTQYVKDLSFENPNAPQSLGPADEQPSINVRVDVGVKRMSATDFEVALKIGAEATVKDKAMFLVELDYAGLFRVVNVPEQDLEAVLVIECPRQIFPFARRILADTTRDGGFPPLMIDPIDFVGLYNQRHQQAPDAAAAAKPN.

A compositionally biased stretch (polar residues) spans 1–10 (MSDQGTNNGE). The interval 1–22 (MSDQGTNNGESGNGGAQNGEAP) is disordered.

It belongs to the SecB family. Homotetramer, a dimer of dimers. One homotetramer interacts with 1 SecA dimer.

It is found in the cytoplasm. One of the proteins required for the normal export of preproteins out of the cell cytoplasm. It is a molecular chaperone that binds to a subset of precursor proteins, maintaining them in a translocation-competent state. It also specifically binds to its receptor SecA. In Parvibaculum lavamentivorans (strain DS-1 / DSM 13023 / NCIMB 13966), this protein is Protein-export protein SecB.